Consider the following 431-residue polypeptide: Zeaxanthin glucosyltransferase (431 aa).

Belongs to the UDP-glycosyltransferase family.

It carries out the reaction all-trans-zeaxanthin + 2 UDP-alpha-D-glucose = zeaxanthin bis(beta-D-glucoside) + 2 UDP + 2 H(+). The protein operates within carotenoid biosynthesis; zeaxanthin diglucoside biosynthesis. Its function is as follows. Catalyzes the glycosylation reaction which converts zeaxanthin to zeaxanthin bis(beta-D-glucoside). The reaction proceeds in two steps with the monoglucoside as an intermediate. This Pantoea ananas (Erwinia uredovora) protein is Zeaxanthin glucosyltransferase (crtX).